A 110-amino-acid polypeptide reads, in one-letter code: Large ribosomal subunit protein uL22 (110 aa).

Belongs to the universal ribosomal protein uL22 family. In terms of assembly, part of the 50S ribosomal subunit.

In terms of biological role, this protein binds specifically to 23S rRNA; its binding is stimulated by other ribosomal proteins, e.g. L4, L17, and L20. It is important during the early stages of 50S assembly. It makes multiple contacts with different domains of the 23S rRNA in the assembled 50S subunit and ribosome. Its function is as follows. The globular domain of the protein is located near the polypeptide exit tunnel on the outside of the subunit, while an extended beta-hairpin is found that lines the wall of the exit tunnel in the center of the 70S ribosome. This Mycoplasma mobile (strain ATCC 43663 / 163K / NCTC 11711) (Mesomycoplasma mobile) protein is Large ribosomal subunit protein uL22.